The primary structure comprises 422 residues: 4-hydroxy-3-methylbut-2-en-1-yl diphosphate synthase (flavodoxin) (422 aa).

The [4Fe-4S] cluster site is built by C316, C319, C362, and E369.

This sequence belongs to the IspG family. Requires [4Fe-4S] cluster as cofactor.

The catalysed reaction is (2E)-4-hydroxy-3-methylbut-2-enyl diphosphate + oxidized [flavodoxin] + H2O + 2 H(+) = 2-C-methyl-D-erythritol 2,4-cyclic diphosphate + reduced [flavodoxin]. It participates in isoprenoid biosynthesis; isopentenyl diphosphate biosynthesis via DXP pathway; isopentenyl diphosphate from 1-deoxy-D-xylulose 5-phosphate: step 5/6. In terms of biological role, converts 2C-methyl-D-erythritol 2,4-cyclodiphosphate (ME-2,4cPP) into 1-hydroxy-2-methyl-2-(E)-butenyl 4-diphosphate. This is 4-hydroxy-3-methylbut-2-en-1-yl diphosphate synthase (flavodoxin) from Ehrlichia ruminantium (strain Gardel).